The sequence spans 510 residues: Histidine ammonia-lyase (510 aa).

The 5-imidazolinone (Ala-Gly) cross-link spans Ala144–Gly146. Position 145 is a 2,3-didehydroalanine (Ser) (Ser145).

Belongs to the PAL/histidase family. Contains an active site 4-methylidene-imidazol-5-one (MIO), which is formed autocatalytically by cyclization and dehydration of residues Ala-Ser-Gly.

It localises to the cytoplasm. It carries out the reaction L-histidine = trans-urocanate + NH4(+). It functions in the pathway amino-acid degradation; L-histidine degradation into L-glutamate; N-formimidoyl-L-glutamate from L-histidine: step 1/3. The polypeptide is Histidine ammonia-lyase (Chromobacterium violaceum (strain ATCC 12472 / DSM 30191 / JCM 1249 / CCUG 213 / NBRC 12614 / NCIMB 9131 / NCTC 9757 / MK)).